Here is a 405-residue protein sequence, read N- to C-terminus: Farnesyl pyrophosphate synthase (405 aa).

Residues D158 and D162 each contribute to the Mg(2+) site. Positions 158 to 162 match the DDXXD motif motif; that stretch reads DDLAD.

It belongs to the FPP/GGPP synthase family. It depends on Mg(2+) as a cofactor.

The enzyme catalyses isopentenyl diphosphate + (2E)-geranyl diphosphate = (2E,6E)-farnesyl diphosphate + diphosphate. It functions in the pathway pheromone biosynthesis. Farnesyl pyrophosphate synthase involved in murgantiol biosynthesis, a male-released aggregation pheromone, by catalyzing the formation of (2E,6E)-farnesyl diphosphate. The polypeptide is Farnesyl pyrophosphate synthase (Murgantia histrionica (Harlequin bug)).